The following is a 160-amino-acid chain: MATQKKPDLSDPTLRAKLAKGMGHNYYGEPAWPNDLLYVFPIVIMGSFACIVALAVLDPAMTGEPANPFATPLEILPEWYLYPVFQILRSLPNKLLGVLAMASVPLGLILVPFIENVNKFQNPFRRPVATTVFLFGTLVTLWLGIGAALPLDKSLTLGLF.

The next 3 helical transmembrane spans lie at 36–56 (LLYVFPIVIMGSFACIVALAV), 95–115 (LLGVLAMASVPLGLILVPFIE), and 131–151 (TVFLFGTLVTLWLGIGAALPL).

It belongs to the cytochrome b family. PetD subfamily. In terms of assembly, the 4 large subunits of the cytochrome b6-f complex are cytochrome b6, subunit IV (17 kDa polypeptide, PetD), cytochrome f and the Rieske protein, while the 4 small subunits are PetG, PetL, PetM and PetN. The complex functions as a dimer.

It is found in the cellular thylakoid membrane. In terms of biological role, component of the cytochrome b6-f complex, which mediates electron transfer between photosystem II (PSII) and photosystem I (PSI), cyclic electron flow around PSI, and state transitions. The protein is Cytochrome b6-f complex subunit 4 of Trichormus variabilis (strain ATCC 29413 / PCC 7937) (Anabaena variabilis).